A 372-amino-acid chain; its full sequence is 4-hydroxy-3-methylbut-2-en-1-yl diphosphate synthase (flavodoxin) (372 aa).

Positions 270, 273, 305, and 312 each coordinate [4Fe-4S] cluster.

It belongs to the IspG family. It depends on [4Fe-4S] cluster as a cofactor.

The enzyme catalyses (2E)-4-hydroxy-3-methylbut-2-enyl diphosphate + oxidized [flavodoxin] + H2O + 2 H(+) = 2-C-methyl-D-erythritol 2,4-cyclic diphosphate + reduced [flavodoxin]. It participates in isoprenoid biosynthesis; isopentenyl diphosphate biosynthesis via DXP pathway; isopentenyl diphosphate from 1-deoxy-D-xylulose 5-phosphate: step 5/6. Converts 2C-methyl-D-erythritol 2,4-cyclodiphosphate (ME-2,4cPP) into 1-hydroxy-2-methyl-2-(E)-butenyl 4-diphosphate. This is 4-hydroxy-3-methylbut-2-en-1-yl diphosphate synthase (flavodoxin) from Escherichia coli O8 (strain IAI1).